Here is a 487-residue protein sequence, read N- to C-terminus: Glutamyl-tRNA(Gln) amidotransferase subunit A (487 aa).

Catalysis depends on charge relay system residues lysine 79 and serine 158. Serine 182 functions as the Acyl-ester intermediate in the catalytic mechanism.

Belongs to the amidase family. GatA subfamily. Heterotrimer of A, B and C subunits.

The enzyme catalyses L-glutamyl-tRNA(Gln) + L-glutamine + ATP + H2O = L-glutaminyl-tRNA(Gln) + L-glutamate + ADP + phosphate + H(+). Functionally, allows the formation of correctly charged Gln-tRNA(Gln) through the transamidation of misacylated Glu-tRNA(Gln) in organisms which lack glutaminyl-tRNA synthetase. The reaction takes place in the presence of glutamine and ATP through an activated gamma-phospho-Glu-tRNA(Gln). This is Glutamyl-tRNA(Gln) amidotransferase subunit A from Ehrlichia ruminantium (strain Welgevonden).